Consider the following 3021-residue polypeptide: Genome polyprotein (3021 aa).

Serine 2 bears the N-acetylserine; by host mark. The interaction with STAT1 stretch occupies residues 2–23 (STLPKPQRKTKRNTIRRPQDVK). The segment at 2 to 58 (STLPKPQRKTKRNTIRRPQDVKFPGGGVIYVGVYVLPRRGPRLGVRATRKTSERSQP) is interaction with EIF2AK2/PKR. The interval 2–59 (STLPKPQRKTKRNTIRRPQDVKFPGGGVIYVGVYVLPRRGPRLGVRATRKTSERSQPR) is interaction with DDX3X. The segment at 2–75 (STLPKPQRKT…PKARRSEGRS (74 aa)) is disordered. The Cytoplasmic portion of the chain corresponds to 2–168 (STLPKPQRKT…EDGINFATGN (167 aa)). Short sequence motifs (nuclear localization signal) lie at residues 5–13 (PKPQRKTKR) and 38–43 (PRRGPR). The segment covering 7-16 (PQRKTKRNTI) has biased composition (basic residues). A Phosphoserine; by host modification is found at serine 53. 2 short sequence motifs (nuclear localization signal) span residues 58–64 (PRGRRKP) and 66–71 (PKARRS). Residues 58 to 68 (PRGRRKPIPKA) are compositionally biased toward basic residues. Residues serine 99 and serine 116 each carry the phosphoserine; by host modification. Residues 112–152 (PRRRSRNLGKVIDTLTCGFADLMGYIPLVGAPLGGAARALA) form an important for endoplasmic reticulum and mitochondrial localization region. An interaction with APOA2 region spans residues 122–173 (VIDTLTCGFADLMGYIPLVGAPLGGAARALAHGVRALEDGINFATGNLPGCS). The tract at residues 164–167 (FATG) is important for lipid droplets localization. The helical transmembrane segment at 169-189 (LPGCSFSIFLLALFSCLIHPA) threads the bilayer. The propeptide at 178-191 (LLALFSCLIHPAAS) is ER anchor for the core protein, removed in mature form by host signal peptidase. The Lumenal portion of the chain corresponds to 190 to 358 (ASLEWRNTSG…AGAHWGIIAG (169 aa)). N-linked (GlcNAc...) asparagine; by host glycosylation is found at asparagine 196, asparagine 209, and asparagine 234. An important for fusion region spans residues 265-296 (LVGAGTMCSALYVGDMCGPVFLVGQAFTFRPR). N-linked (GlcNAc...) asparagine; by host glycosylation is present at asparagine 305. The chain crosses the membrane as a helical span at residues 359–379 (LAYYSMQGNWAKVAIIMVMFS). Residues 380–731 (GVDASTHVTA…WEFVILIFLL (352 aa)) lie on the Lumenal side of the membrane. The tract at residues 385-412 (THVTAGQAARNAYGITSLFSVGAKQNLQ) is HVR1. N-linked (GlcNAc...) (high mannose) asparagine; by host glycosylation is found at asparagine 417, asparagine 423, and asparagine 430. Disulfide bonds link cysteine 429-cysteine 553, cysteine 452-cysteine 459, cysteine 487-cysteine 495, and cysteine 504-cysteine 509. Asparagine 448 is a glycosylation site (N-linked (GlcNAc...) asparagine; by host). Residues 475 to 479 (ANITG) are HVR2. N-linked (GlcNAc...) asparagine; by host glycosylation is present at asparagine 476. The tract at residues 481–494 (SDDKPYCWHYAPRP) is CD81-binding 1. N-linked (GlcNAc...) asparagine; by host glycosylation is present at asparagine 533. A CD81-binding 2 region spans residues 545 to 552 (PPSGRWFG). The N-linked (GlcNAc...) asparagine; by host glycan is linked to asparagine 557. Cystine bridges form between cysteine 565–cysteine 570, cysteine 587–cysteine 591, cysteine 603–cysteine 626, and cysteine 613–cysteine 650. 2 N-linked (GlcNAc...) (high mannose) asparagine; by host glycosylation sites follow: asparagine 629 and asparagine 651. The cysteines at positions 658 and 683 are disulfide-linked. Residues 666-677 (SEQHPLLHSTTE) are PKR/eIF2-alpha phosphorylation homology domain (PePHD). The chain crosses the membrane as a helical span at residues 732-752 (LADARVCVALWLILTISQAEA). Topologically, residues 753 to 763 (ALENLVTLNAV) are lumenal. A helical transmembrane segment spans residues 764–784 (AAAGTHGIGWYLVAFCAAWYV). At 785–787 (RGK) the chain is on the cytoplasmic side. A helical transmembrane segment spans residues 788–809 (LVPLVTYSLTGLWSLALLVLLL). Residues 810 to 819 (PQRAYAWSGE) lie on the Lumenal side of the membrane. The chain crosses the membrane as a helical span at residues 820–840 (DSATLGAGILVLFGFFTLSPW). At 841–844 (YKHW) the chain is on the cytoplasmic side. A helical transmembrane segment spans residues 845-864 (IARLIWWNQYTICRCESALH). Residues 865 to 887 (VWVPPLLARGGRDGVILLTSLLY) are Lumenal-facing. The chain crosses the membrane as a helical span at residues 888–908 (PSLIFDITKLLIAALGPLYLI). The 128-residue stretch at 905-1032 (LYLIQATITA…DYREMGWRLL (128 aa)) folds into the Peptidase C18 domain. At 909 to 1663 (QATITATPYF…CMSADLEVTT (755 aa)) the chain is on the cytoplasmic side. The protease NS2-3 stretch occupies residues 910 to 1212 (ATITATPYFV…PVETLSTQAR (303 aa)). Cysteine 928 carries S-palmitoyl cysteine; by host lipidation. Residues 935 to 955 (MGGKYFQMIILSLADGSNTYL) form an interaction with host SCPS1 region. Catalysis depends on for protease NS2 activity; shared with dimeric partner residues histidine 958, glutamate 978, and cysteine 999. The Peptidase S29 domain occupies 1033 to 1214 (APITAYAQQT…ETLSTQARSP (182 aa)). Active-site charge relay system; for serine protease NS3 activity residues include histidine 1089 and aspartate 1113. Zn(2+) contacts are provided by cysteine 1129 and cysteine 1131. Serine 1171 functions as the Charge relay system; for serine protease NS3 activity in the catalytic mechanism. Zn(2+) contacts are provided by cysteine 1177 and histidine 1181. The Helicase ATP-binding domain occupies 1223–1375 (PAVPQSYQVG…SNIEEVALGS (153 aa)). Residue 1236 to 1243 (APTGSGKS) coordinates ATP. A Mg(2+)-binding site is contributed by serine 1243. Residues 1322–1325 (DDCH) carry the DECH box motif. The Helicase C-terminal domain maps to 1382 to 1544 (YGKAIPIACI…DLQPAETTVR (163 aa)). The RNA-binding stretch occupies residues 1492–1504 (QRRGRTGRGRLGT). Residues 1664-1684 (STWVLLGGVLAAVAAYCLSVG) traverse the membrane as a helical segment. The NS3-binding stretch occupies residues 1685–1696 (CVVIVGHIELGG). Over 1685-1811 (CVVIVGHIEL…SVTSPLTTNQ (127 aa)) the chain is Cytoplasmic. Residues 1812–1830 (TMFFNILGGWVATHLAGPQ) traverse the membrane as a helical segment. Over 1831 to 1834 (ASSA) the chain is Lumenal. Residues 1835-1855 (FVVSGLAGAAIGGIGLGRVLL) form a helical membrane-spanning segment. A topological domain (cytoplasmic) is located at residue aspartate 1856. The helical transmembrane segment at 1857–1877 (ILAGYGAGVSGALVAFKIMGG) threads the bilayer. Topologically, residues 1878 to 1887 (EPPTTEDMVN) are lumenal. A helical transmembrane segment spans residues 1888-1908 (LLPAILSPGALVVGVICAAIL). At 1909-1978 (RRHVGPGEGP…WINEDYPSPC (70 aa)) the chain is on the cytoplasmic side. Residue cysteine 1978 is the site of S-palmitoyl cysteine; by host attachment. The stretch at 1979–2008 (SGDWLRIIWDWVCSVVSDFKTWLSAKIMPA) is an intramembrane region. The Cytoplasmic portion of the chain corresponds to 2009–3000 (LPGLPFISCQ…YHSVSRARTR (992 aa)). Zn(2+) contacts are provided by cysteine 2017, cysteine 2035, cysteine 2037, and cysteine 2058. Residues 2126–2214 (EFFTEVDGVR…ASSSASQLSA (89 aa)) are FKBP8-binding. The segment at 2126–2338 (EFFTEVDGVR…PVPPPRRKRT (213 aa)) is transcriptional activation. An interaction with non-structural protein 4A region spans residues 2141 to 2145 (PPCRP). The interval 2193–2215 (ARRLARGSPPSEASSSASQLSAP) is disordered. The tract at residues 2195–2448 (RLARGSPPSE…ALITPCSAEE (254 aa)) is interaction with host SKP2. 6 positions are modified to phosphoserine; by host: serine 2200, serine 2203, serine 2207, serine 2210, serine 2213, and serine 2216. Positions 2200-2215 (SPPSEASSSASQLSAP) are enriched in low complexity. Residues 2216–2255 (SLKATCQTHRPHPDAELVDANLLWRQEMGSNITRVESETK) are ISDR. Residues 2216–2281 (SLKATCQTHR…AELSAAAECF (66 aa)) are interaction with EIF2AK2/PKR. Residues 2255–2312 (KVVILDSFEPLRAETDDAELSAAAECFKKPPKYPPALPIWARPDYNPPLLDRWKSPDY) are NS4B-binding. Residues 2305 to 2383 (DRWKSPDYVP…DTQSSTASKV (79 aa)) are V3. 2 disordered regions span residues 2318 to 2338 (HGCA…RKRT) and 2356 to 2419 (KSFP…WSTV). Positions 2328 to 2331 (PPVP) match the SH3-binding motif. The Nuclear localization signal motif lies at 2333 to 2341 (PRRKRTIQL). Residue lysine 2356 forms a Glycyl lysine isopeptide (Lys-Gly) (interchain with G-Cter in ubiquitin) linkage. The segment covering 2359 to 2381 (PSSKPQEENSSSSGVDTQSSTAS) has biased composition (low complexity). Phosphoserine; by host is present on residues serine 2459 and serine 2472. The region spanning 2644-2762 (PLGFSYDTRC…VAESDGVDED (119 aa)) is the RdRp catalytic domain. Aspartate 2650, aspartate 2748, and aspartate 2749 together coordinate Mg(2+). Residues 3001–3021 (YLLLCLLLLTVGVGIFLLPAR) traverse the membrane as a helical segment.

The protein belongs to the hepacivirus polyprotein family. In terms of assembly, homooligomer. Interacts with E1 (via C-terminus). Interacts with the non-structural protein 5A. Interacts (via N-terminus) with host STAT1 (via SH2 domain); this interaction results in decreased STAT1 phosphorylation and ubiquitin-mediated proteasome-dependent STAT1 degradation, leading to decreased IFN-stimulated gene transcription. Interacts with host STAT3; this interaction constitutively activates STAT3. Interacts with host LTBR receptor. Interacts with host TNFRSF1A receptor and possibly induces apoptosis. Interacts with host HNRPK. Interacts with host YWHAE. Interacts with host UBE3A/E6AP. Interacts with host DDX3X. Interacts with host APOA2. Interacts with host RXRA protein. Interacts with host SP110 isoform 3/Sp110b; this interaction sequesters the transcriptional corepressor SP110 away from the nucleus. Interacts with host CREB3 nuclear transcription protein; this interaction triggers cell transformation. Interacts with host ACY3. Interacts with host C1QR1. Interacts with host RBM24; this interaction, which enhances the interaction of the mature core protein with 5'-UTR, may inhibit viral translation and favor replication. Interacts with host EIF2AK2/PKR; this interaction induces the autophosphorylation of EIF2AK2. Part of the viral assembly initiation complex composed of NS2, E1, E2, NS3, NS4A, NS5A and the mature core protein. Forms a heterodimer with envelope glycoprotein E2. Interacts with mature core protein. Interacts with protease NS2. The heterodimer E1/E2 interacts with host CLDN1; this interaction plays a role in viral entry into host cell. Interacts with host SPSB2 (via C-terminus). Part of the viral assembly initiation complex composed of NS2, E1, E2, NS3, NS4A, NS5A and the mature core protein. Interacts with host NEURL3; this interaction prevents E1 binding to glycoprotein E2. As to quaternary structure, forms a heterodimer with envelope glycoprotein E1. Interacts with host CD81 and SCARB1 receptors; these interactions play a role in viral entry into host cell. Interacts with host EIF2AK2/PKR; this interaction inhibits EIF2AK2 and probably allows the virus to evade the innate immune response. Interacts with host CD209/DC-SIGN and CLEC4M/DC-SIGNR. Interact with host SPCS1; this interaction is essential for viral particle assembly. Interacts with protease NS2. The heterodimer E1/E2 interacts with host CLDN1; this interaction plays a role in viral entry into host cell. Part of the viral assembly initiation complex composed of NS2, E1, E2, NS3, NS4A, NS5A and the mature core protein. Interacts with host SLC3A2/4F2hc; the interaction may facilitate viral entry into host cell. Interacts with human PLSCR1. In terms of assembly, homohexamer. Homoheptamer. Interacts with protease NS2. Homodimer. Interacts with host SPCS1; this interaction is essential for viral particle assembly. Interacts with envelope glycoprotein E1. Interacts with envelope glycoprotein E2. Interacts with viroporin p7. Interacts with serine protease/helicase NS3. Part of the replication complex composed of NS2, NS3, NS4A, NS4B, NS5A and the RNA-directed RNA polymerase embedded in an ER-derived membranous web. Part of the viral assembly initiation complex composed of NS2, E1, E2, NS3, NS4A, NS5A and the mature core protein. As to quaternary structure, interacts with protease NS2. Interacts with non-structural protein 4A; this interaction stabilizes the folding of NS3 serine protease. NS3-NS4A interaction is essential for NS3 activation and allows membrane anchorage of the latter. NS3/NS4A complex also prevents phosphorylation of host IRF3, thus preventing the establishment of dsRNA induced antiviral state. Interacts with host MAVS; this interaction leads to the cleavage and inhibition of host MAVS. Interacts with host TICAM1; this interaction leads to the cleavage and inhibition of host TICAM1. Interacts with host TANK-binding kinase/TBK1; this interaction results in the inhibition of the association between TBK1 and IRF3, which leads to the inhibition of IRF3 activation. Interacts with host RBM24. Part of the replication complex composed of NS2, NS3, NS4A, NS4B, NS5A and the RNA-directed RNA polymerase embedded in an ER-derived membranous web. Part of the viral assembly initiation complex composed of NS2, E1, E2, NS3, NS4A, NS5A and the mature core protein. In terms of assembly, interacts with NS3 serine protease; this interaction stabilizes the folding of NS3 serine protease. NS3-NS4A interaction is essential for NS3 activation and allows membrane anchorage of the latter. Interacts with non-structural protein 5A (via N-terminus). Part of the replication complex composed of NS2, NS3, NS4A, NS4B, NS5A and the RNA-directed RNA polymerase embedded in an ER-derived membranous web. Part of the viral assembly initiation complex composed of NS2, E1, E2, NS3, NS4A, NS5A and the mature core protein. Homomultimer. Interacts with non-structural protein NS5A. Interacts with host PLA2G4C; this interaction likely initiates the recruitment of replication complexes to lipid droplets. Interacts with host STING; this interaction disrupts the interaction between STING and TBK1 thereby suppressing the interferon signaling. Part of the replication complex composed of NS2, NS3, NS4A, NS4B, NS5A and the RNA-directed RNA polymerase embedded in an ER-derived membranous web. As to quaternary structure, monomer. Homodimer; dimerization is required for RNA-binding. Interacts with the mature core protein. Interacts (via N-terminus) with non-structural protein 4A. Interacts with non-structural protein 4B. Interacts (via region D2) with RNA-directed RNA polymerase. Part of the viral assembly initiation complex composed of NS2, E1, E2, NS3, NS4A, NS5A and the mature core protein. Part of the replication complex composed of NS2, NS3, NS4A, NS4B, NS5A and the RNA-directed RNA polymerase embedded in an ER-derived membranous web. Interacts with host GRB2. Interacts with host BIN1. Interacts with host PIK3R1. Interacts with host SRCAP. Interacts with host FKBP8. Interacts (via C-terminus) with host VAPB (via MSP domain). Interacts with host EIF2AK2/PKR; this interaction leads to disruption of EIF2AK2 dimerization by NS5A and probably allows the virus to evade the innate immune response. Interacts (via N-terminus) with host PACSIN2 (via N-terminus); this interaction attenuates protein kinase C alpha-mediated phosphorylation of PACSIN2 by disrupting the interaction between PACSIN2 and PRKCA. Interacts (via N-terminus) with host SRC kinase (via SH2 domain). Interacts with most Src-family kinases. Interacts with host IFI27 and SKP2; promotes the ubiquitin-mediated proteasomal degradation of NS5A. Interacts with host GPS2. Interacts with host TNFRSF21; this interaction allows the modulation by the virus of JNK, p38 MAPK, STAT3, and Akt signaling pathways in a DR6-dependent manner. Interacts (via N-terminus) with host CIDEB (via N-terminus); this interaction seems to regulate the association of HCV particles with APOE. Interacts with host CHKA/Choline Kinase-alpha; CHKA bridges host PI4KA and NS5A and potentiates NS5A-stimulated PI4KA activity, which then facilitates the targeting of the ternary complex to the ER for viral replication. Interacts with host SPSB2 (via C-terminus); this interaction targets NS5A for ubiquitination and degradation. Interacts with host RAB18; this interaction may promote the association of NS5A and other replicase components with lipid droplets. Interacts (via region D2) with host PPIA/CYPA; the interaction stimulates RNA-binding ability of NS5A and is dependent on the peptidyl-prolyl cis-trans isomerase activity of PPIA/CYPA. Interacts with host TRIM14; this interaction induces the degradation of NS5A. In terms of assembly, homooligomer. Interacts with non-structural protein 5A. Interacts with host VAPB. Interacts with host PRK2/PKN2. Interacts with host HNRNPA1 and SEPT6; these interactions facilitate viral replication. Part of the replication complex composed of NS2, NS3, NS4A, NS4B, NS5A and the RNA-directed RNA polymerase. The cofactor is Zn(2+). Requires Mg(2+) as cofactor. Specific enzymatic cleavages in vivo yield mature proteins. The structural proteins, core, E1, E2 and p7 are produced by proteolytic processing by host signal peptidases. The core protein precursor is synthesized as a 23 kDa, which is retained in the ER membrane through the hydrophobic signal peptide. Cleavage by the signal peptidase releases the 21 kDa mature core protein. The cleavage of the core protein precursor occurs between aminoacids 176 and 188 but the exact cleavage site is not known. Some degraded forms of the core protein appear as well during the course of infection. The other proteins (p7, NS2, NS3, NS4A, NS4B, NS5A and NS5B) are cleaved by the viral proteases. Autoprocessing between NS2 and NS3 is mediated by the NS2 cysteine protease catalytic domain and regulated by the NS3 N-terminal domain. Post-translationally, phosphorylated by host PKC and PKA. In terms of processing, ubiquitinated; mediated by UBE3A and leading to core protein subsequent proteasomal degradation. Highly N-glycosylated. Post-translationally, palmitoylation is required for NS2/3 autoprocessing and E2 recruitment to membranes. In terms of processing, palmitoylated. This modification may play a role in its polymerization or in protein-protein interactions. Phosphorylated on serines in a basal form termed p56. p58 is a hyperphosphorylated form of p56. p56 and p58 coexist in the cell in roughly equivalent amounts. Hyperphosphorylation is dependent on the presence of NS4A. Host CSNK1A1/CKI-alpha or RPS6KB1 kinases may be responsible for NS5A phosphorylation. Post-translationally, tyrosine phosphorylation is essential for the interaction with host SRC. In terms of processing, ubiquitinated. Ubiquitination, most probably at Lys-2356, mediated by host IFI27 and SKP2 leads to proteasomal degradation, restricting viral infection. Ubiquitination by host TRIM22 leads to interruption of viral replication. The N-terminus is phosphorylated by host PRK2/PKN2.

The protein localises to the host endoplasmic reticulum membrane. Its subcellular location is the host mitochondrion membrane. It localises to the virion. It is found in the host cytoplasm. The protein resides in the host nucleus. The protein localises to the host lipid droplet. Its subcellular location is the virion membrane. It localises to the host mitochondrion. It is found in the host cell membrane. The protein resides in the host perinuclear region. The catalysed reaction is Hydrolysis of four peptide bonds in the viral precursor polyprotein, commonly with Asp or Glu in the P6 position, Cys or Thr in P1 and Ser or Ala in P1'.. It carries out the reaction a ribonucleoside 5'-triphosphate + H2O = a ribonucleoside 5'-diphosphate + phosphate + H(+). The enzyme catalyses ATP + H2O = ADP + phosphate + H(+). It catalyses the reaction RNA(n) + a ribonucleoside 5'-triphosphate = RNA(n+1) + diphosphate. Inhibited by the antiviral drug hexamethylene amiloride. Inhibition by amantadine appears to be genotype-dependent. Also inhibited by long-alkyl-chain iminosugar derivatives. Its activity is regulated as follows. Activity is up-regulated by PRK2/PKN2-mediated phosphorylation. In terms of biological role, packages viral RNA to form a viral nucleocapsid, and promotes virion budding. Participates in the viral particle production as a result of its interaction with the non-structural protein 5A. Binds RNA and may function as a RNA chaperone to induce the RNA structural rearrangements taking place during virus replication. Modulates viral translation initiation by interacting with viral IRES and 40S ribosomal subunit. Affects various cell signaling pathways, host immunity and lipid metabolism. Prevents the establishment of cellular antiviral state by blocking the interferon-alpha/beta (IFN-alpha/beta) and IFN-gamma signaling pathways and by blocking the formation of phosphorylated STAT1 and promoting ubiquitin-mediated proteasome-dependent degradation of STAT1. Activates STAT3 leading to cellular transformation. Regulates the activity of cellular genes, including c-myc and c-fos. May repress the promoter of p53, and sequester CREB3 and SP110 isoform 3/Sp110b in the cytoplasm. Represses cell cycle negative regulating factor CDKN1A, thereby interrupting an important check point of normal cell cycle regulation. Targets transcription factors involved in the regulation of inflammatory responses and in the immune response: suppresses TNF-induced NF-kappa-B activation, and activates AP-1. Binds to dendritic cells (DCs) via C1QR1, resulting in down-regulation of T-lymphocytes proliferation. Alters lipid metabolism by interacting with hepatocellular proteins involved in lipid accumulation and storage. Induces up-regulation of FAS promoter activity, and thereby contributes to the increased triglyceride accumulation in hepatocytes (steatosis). Functionally, forms a heterodimer with envelope glycoprotein E2, which mediates virus attachment to the host cell, virion internalization through clathrin-dependent endocytosis and fusion with host membrane. Fusion with the host cell is most likely mediated by both E1 and E2, through conformational rearrangements of the heterodimer required for fusion rather than a classical class II fusion mechanism. E1/E2 heterodimer binds host apolipoproteins such as APOB and ApoE thereby forming a lipo-viro-particle (LVP). APOE associated to the LVP allows the initial virus attachment to cell surface receptors such as the heparan sulfate proteoglycans (HSPGs), syndecan-1 (SDC1), syndecan-1 (SDC2), the low-density lipoprotein receptor (LDLR) and scavenger receptor class B type I (SCARB1). The cholesterol transfer activity of SCARB1 allows E2 exposure and binding of E2 to SCARB1 and the tetraspanin CD81. E1/E2 heterodimer binding on CD81 activates the epithelial growth factor receptor (EGFR) signaling pathway. Diffusion of the complex E1-E2-EGFR-SCARB1-CD81 to the cell lateral membrane allows further interaction with Claudin 1 (CLDN1) and occludin (OCLN) to finally trigger HCV entry. Forms a heterodimer with envelope glycoprotein E1, which mediates virus attachment to the host cell, virion internalization through clathrin-dependent endocytosis and fusion with host membrane. Fusion with the host cell is most likely mediated by both E1 and E2, through conformational rearrangements of the heterodimer required for fusion rather than a classical class II fusion mechanism. The interaction between envelope glycoprotein E2 and host apolipoprotein E/APOE allows the proper assembly, maturation and infectivity of the viral particles. This interaction is probably promoted via the up-regulation of cellular autophagy by the virus. E1/E2 heterodimer binds host apolipoproteins such as APOB and APOE thereby forming a lipo-viro-particle (LVP). APOE associated to the LVP allows the initial virus attachment to cell surface receptors such as the heparan sulfate proteoglycans (HSPGs), syndecan-1 (SDC1), syndecan-1 (SDC2), the low-density lipoprotein receptor (LDLR) and scavenger receptor class B type I (SCARB1). The cholesterol transfer activity of SCARB1 allows E2 exposure and binding of E2 to SCARB1 and the tetraspanin CD81. E1/E2 heterodimer binding on CD81 activates the epithelial growth factor receptor (EGFR) signaling pathway. Diffusion of the complex E1-E2-EGFR-SCARB1-CD81 to the cell lateral membrane allows further interaction with Claudin 1 (CLDN1) and occludin (OCLN) to finally trigger HCV entry. Inhibits host EIF2AK2/PKR activation, preventing the establishment of an antiviral state. Viral ligand for CD209/DC-SIGN and CLEC4M/DC-SIGNR, which are respectively found on dendritic cells (DCs), and on liver sinusoidal endothelial cells and macrophage-like cells of lymph node sinuses. These interactions allow the capture of circulating HCV particles by these cells and subsequent facilitated transmission to permissive cells such as hepatocytes and lymphocyte subpopulations. The interaction between E2 and host amino acid transporter complex formed by SLC3A2 and SLC7A5/LAT1 may facilitate viral entry into host cell. Its function is as follows. Ion channel protein that acts as a viroporin and plays an essential role in the assembly, envelopment and secretion of viral particles. Regulates the host cell secretory pathway, which induces the intracellular retention of viral glycoproteins and favors assembly of viral particles. Creates a pore in acidic organelles and releases Ca(2+) and H(+) in the cytoplasm of infected cells, leading to a productive viral infection. High levels of cytoplasmic Ca(2+) may trigger membrane trafficking and transport of viral ER-associated proteins to viroplasms, sites of viral genome replication. This ionic imbalance induces the assembly of the inflammasome complex, which triggers the maturation of pro-IL-1beta into IL-1beta through the action of caspase-1. Targets also host mitochondria and induces mitochondrial depolarization. In addition of its role as a viroporin, acts as a lipid raft adhesion factor. In terms of biological role, cysteine protease required for the proteolytic auto-cleavage between the non-structural proteins NS2 and NS3. The N-terminus of NS3 is required for the function of NS2 protease (active region NS2-3). Promotes the initiation of viral particle assembly by mediating the interaction between structural and non-structural proteins. Functionally, displays three enzymatic activities: serine protease with a chymotrypsin-like fold, NTPase and RNA helicase. NS3 serine protease, in association with NS4A, is responsible for the cleavages of NS3-NS4A, NS4A-NS4B, NS4B-NS5A and NS5A-NS5B. The NS3/NS4A complex prevents phosphorylation of host IRF3, thus preventing the establishment of dsRNA induced antiviral state. The NS3/NS4A complex induces host amino acid transporter component SLC3A2, thus contributing to HCV propagation. NS3 RNA helicase binds to RNA and unwinds both dsDNA and dsRNA in the 3' to 5' direction, and likely resolves RNA complicated stable secondary structures in the template strand. Binds a single ATP and catalyzes the unzipping of a single base pair of dsRNA. Inhibits host antiviral proteins TBK1 and IRF3 thereby preventing the establishment of an antiviral state. Cleaves host MAVS/CARDIF thereby preventing the establishment of an antiviral state. Cleaves host TICAM1/TRIF, thereby disrupting TLR3 signaling and preventing the establishment of an antiviral state. Peptide cofactor which forms a non-covalent complex with the N-terminal of NS3 serine protease. The NS3/NS4A complex prevents phosphorylation of host IRF3, thus preventing the establishment of dsRNA induced antiviral state. The NS3/NS4A complex induces host amino acid transporter component SLC3A2, thus contributing to HCV propagation. Its function is as follows. Induces a specific membrane alteration that serves as a scaffold for the virus replication complex. This membrane alteration gives rise to the so-called ER-derived membranous web that contains the replication complex. NS4B self-interaction contributes to its function in membranous web formation. Promotes host TRIF protein degradation in a CASP8-dependent manner thereby inhibiting host TLR3-mediated interferon signaling. Disrupts the interaction between STING and TBK1 contributing to the inhibition of interferon signaling. In terms of biological role, phosphorylated protein that is indispensable for viral replication and assembly. Both hypo- and hyperphosphorylated states are required for the viral life cycle. The hyperphosphorylated form of NS5A is an inhibitor of viral replication. Involved in RNA-binding and especially in binding to the viral genome. Zinc is essential for RNA-binding. Participates in the viral particle production as a result of its interaction with the mature viral core protein. Its interaction with host VAPB may target the viral replication complex to vesicles. Down-regulates viral IRES translation initiation. Mediates interferon resistance, presumably by interacting with and inhibiting host EIF2AK2/PKR. Prevents BIN1-induced apoptosis. Acts as a transcriptional activator of some host genes important for viral replication when localized in the nucleus. Via the interaction with host PACSIN2, modulates lipid droplet formation in order to promote virion assembly. Modulates TNFRSF21/DR6 signaling pathway for viral propagation. Functionally, RNA-dependent RNA polymerase that performs primer-template recognition and RNA synthesis during viral replication. Initiates RNA transcription/replication at a flavin adenine dinucleotide (FAD), resulting in a 5'- FAD cap on viral RNAs. In this way, recognition of viral 5' RNA by host pattern recognition receptors can be bypassed, thereby evading activation of antiviral pathways. This chain is Genome polyprotein, found in Homo sapiens (Human).